We begin with the raw amino-acid sequence, 123 residues long: Ribonuclease P protein component (123 aa).

The protein belongs to the RnpA family. Consists of a catalytic RNA component (M1 or rnpB) and a protein subunit.

The catalysed reaction is Endonucleolytic cleavage of RNA, removing 5'-extranucleotides from tRNA precursor.. Its function is as follows. RNaseP catalyzes the removal of the 5'-leader sequence from pre-tRNA to produce the mature 5'-terminus. It can also cleave other RNA substrates such as 4.5S RNA. The protein component plays an auxiliary but essential role in vivo by binding to the 5'-leader sequence and broadening the substrate specificity of the ribozyme. This Bordetella bronchiseptica (strain ATCC BAA-588 / NCTC 13252 / RB50) (Alcaligenes bronchisepticus) protein is Ribonuclease P protein component.